The chain runs to 488 residues: Wax ester synthase/diacylglycerol acyltransferase 8 (488 aa).

Residues 1–195 lie on the Cytoplasmic side of the membrane; the sequence is MKNEEEEPLS…AIFTIGSTMR (195 aa). His135 serves as the catalytic Proton acceptor. Residues 196–214 form a helical membrane-spanning segment; that stretch reads LIWNTLVDMFLLFATMLFL. Residues 215 to 488 lie on the Lumenal side of the membrane; sequence KDTKTPLKGG…RGLLKEAYKV (274 aa). N-linked (GlcNAc...) asparagine glycosylation is found at Asn238, Asn252, Asn353, and Asn397.

This sequence in the N-terminal section; belongs to the long-chain O-acyltransferase family. As to expression, mostly expressed in flowers and siliques and at low levels in stems.

Its subcellular location is the cell membrane. It localises to the endoplasmic reticulum membrane. It carries out the reaction an acyl-CoA + a 1,2-diacyl-sn-glycerol = a triacyl-sn-glycerol + CoA. The catalysed reaction is a long chain fatty alcohol + a fatty acyl-CoA = a wax ester + CoA. It functions in the pathway glycerolipid metabolism; triacylglycerol biosynthesis. The protein operates within lipid metabolism. Its function is as follows. Bifunctional wax ester synthase/diacylglycerol acyltransferase. Involved in cuticular wax biosynthesis. This chain is Wax ester synthase/diacylglycerol acyltransferase 8, found in Arabidopsis thaliana (Mouse-ear cress).